We begin with the raw amino-acid sequence, 626 residues long: Chaperone protein HtpG (626 aa).

Positions Met-1–Arg-341 are a; substrate-binding. The interval Glu-342–Lys-552 is b. The interval Asp-490–Asn-509 is disordered. The span at Lys-498–Asn-509 shows a compositional bias: basic and acidic residues. Positions Val-553 to Lys-626 are c.

Belongs to the heat shock protein 90 family. Homodimer.

It localises to the cytoplasm. Functionally, molecular chaperone. Has ATPase activity. This is Chaperone protein HtpG from Clostridium botulinum (strain ATCC 19397 / Type A).